Reading from the N-terminus, the 161-residue chain is Protein-export protein SecB (161 aa).

This sequence belongs to the SecB family. Homotetramer, a dimer of dimers. One homotetramer interacts with 1 SecA dimer.

Its subcellular location is the cytoplasm. Its function is as follows. One of the proteins required for the normal export of preproteins out of the cell cytoplasm. It is a molecular chaperone that binds to a subset of precursor proteins, maintaining them in a translocation-competent state. It also specifically binds to its receptor SecA. The sequence is that of Protein-export protein SecB from Coxiella burnetii (strain Dugway 5J108-111).